A 621-amino-acid polypeptide reads, in one-letter code: Chaperone protein HscA homolog (621 aa).

This sequence belongs to the heat shock protein 70 family.

Its function is as follows. Chaperone involved in the maturation of iron-sulfur cluster-containing proteins. Has a low intrinsic ATPase activity which is markedly stimulated by HscB. In Acidithiobacillus ferrooxidans (strain ATCC 23270 / DSM 14882 / CIP 104768 / NCIMB 8455) (Ferrobacillus ferrooxidans (strain ATCC 23270)), this protein is Chaperone protein HscA homolog.